The following is a 77-amino-acid chain: Translation initiation factor IF-1, chloroplastic (77 aa).

The 71-residue stretch at 1–71 (MKEQKLIHEG…TRGRIIYRLR (71 aa)) folds into the S1-like domain.

It belongs to the IF-1 family. In terms of assembly, component of the 30S ribosomal translation pre-initiation complex which assembles on the 30S ribosome in the order IF-2 and IF-3, IF-1 and N-formylmethionyl-tRNA(fMet); mRNA recruitment can occur at any time during PIC assembly.

It is found in the plastid. It localises to the chloroplast. Its function is as follows. One of the essential components for the initiation of protein synthesis. Stabilizes the binding of IF-2 and IF-3 on the 30S subunit to which N-formylmethionyl-tRNA(fMet) subsequently binds. Helps modulate mRNA selection, yielding the 30S pre-initiation complex (PIC). Upon addition of the 50S ribosomal subunit IF-1, IF-2 and IF-3 are released leaving the mature 70S translation initiation complex. The polypeptide is Translation initiation factor IF-1, chloroplastic (Cabomba caroliniana (Carolina fanwort)).